The chain runs to 224 residues: Peroxiredoxin-6 (224 aa).

A Thioredoxin domain is found at 5–169 (LLLGDEAPNF…ILRVVDSLQL (165 aa)). Positions 31-40 (DSWGILFSHP) are required and sufficient for targeting to lysosomes and lamellar bodies. Thr-44 is subject to Phosphothreonine. Cys-47 (cysteine sulfenic acid (-SOH) intermediate; for peroxidase activity) is an active-site residue. The residue at position 63 (Lys-63) is an N6-acetyllysine. Tyr-89 bears the Phosphotyrosine mark. Residue Asp-140 is the For phospholipase activity of the active site. Residue Thr-177 is modified to Phosphothreonine; by MAPK. N6-acetyllysine; alternate is present on Lys-209. Position 209 is an N6-succinyllysine; alternate (Lys-209).

This sequence belongs to the peroxiredoxin family. Prx6 subfamily. In terms of assembly, homodimer. Interacts with GSTP1; mediates PRDX6 glutathionylation and regeneration. Interacts with APEX1. Interacts with STH. May interact with FAM168B. May interact with HTR2A. Post-translationally, phosphorylation at Thr-177 by MAP kinases increases the phospholipase activity of the enzyme. Phosphorylated form exhibits a greater lysophosphatidylcholine acyltransferase activity compared to the non-phosphorylated form. Irreversibly inactivated by overoxidation of Cys-47 to sulfinic acid (Cys-SO(2)H) and sulfonic acid (Cys-SO(3)H) forms upon oxidative stress.

It is found in the cytoplasm. Its subcellular location is the lysosome. It carries out the reaction a hydroperoxide + 2 glutathione = an alcohol + glutathione disulfide + H2O. The enzyme catalyses a 1,2-diacyl-sn-glycero-3-phosphocholine + H2O = a 1-acyl-sn-glycero-3-phosphocholine + a fatty acid + H(+). The catalysed reaction is a 1-acyl-sn-glycero-3-phosphocholine + an acyl-CoA = a 1,2-diacyl-sn-glycero-3-phosphocholine + CoA. It catalyses the reaction 1-hexadecanoyl-sn-glycero-3-phosphocholine + hexadecanoyl-CoA = 1,2-dihexadecanoyl-sn-glycero-3-phosphocholine + CoA. It carries out the reaction 1,2-dihexadecanoyl-sn-glycero-3-phosphocholine + H2O = 1-hexadecanoyl-sn-glycero-3-phosphocholine + hexadecanoate + H(+). In terms of biological role, thiol-specific peroxidase that catalyzes the reduction of hydrogen peroxide and organic hydroperoxides to water and alcohols, respectively. Can reduce H(2)O(2) and short chain organic, fatty acid, and phospholipid hydroperoxides. Also has phospholipase activity, can therefore either reduce the oxidized sn-2 fatty acyl group of phospholipids (peroxidase activity) or hydrolyze the sn-2 ester bond of phospholipids (phospholipase activity). These activities are dependent on binding to phospholipids at acidic pH and to oxidized phospholipds at cytosolic pH. Plays a role in cell protection against oxidative stress by detoxifying peroxides and in phospholipid homeostasis. Exhibits acyl-CoA-dependent lysophospholipid acyltransferase which mediates the conversion of lysophosphatidylcholine (1-acyl-sn-glycero-3-phosphocholine or LPC) into phosphatidylcholine (1,2-diacyl-sn-glycero-3-phosphocholine or PC). Shows a clear preference for LPC as the lysophospholipid and for palmitoyl CoA as the fatty acyl substrate. This Rattus norvegicus (Rat) protein is Peroxiredoxin-6 (Prdx6).